We begin with the raw amino-acid sequence, 533 residues long: Glucose-6-phosphate isomerase (533 aa).

Glutamate 341 serves as the catalytic Proton donor. Active-site residues include histidine 372 and lysine 501.

The protein belongs to the GPI family.

It is found in the cytoplasm. It carries out the reaction alpha-D-glucose 6-phosphate = beta-D-fructose 6-phosphate. Its pathway is carbohydrate biosynthesis; gluconeogenesis. It functions in the pathway carbohydrate degradation; glycolysis; D-glyceraldehyde 3-phosphate and glycerone phosphate from D-glucose: step 2/4. Catalyzes the reversible isomerization of glucose-6-phosphate to fructose-6-phosphate. The protein is Glucose-6-phosphate isomerase of Cereibacter sphaeroides (strain ATCC 17029 / ATH 2.4.9) (Rhodobacter sphaeroides).